A 345-amino-acid chain; its full sequence is Probable dual-specificity RNA methyltransferase RlmN (345 aa).

E98 (proton acceptor) is an active-site residue. The Radical SAM core domain occupies 104-332; the sequence is TYKRLTVCVS…VSIRYSRGLE (229 aa). A disulfide bridge connects residues C111 and C337. [4Fe-4S] cluster-binding residues include C118, C122, and C125. S-adenosyl-L-methionine contacts are provided by residues 165–166, S195, 218–220, and N294; these read GE and SLH. C337 acts as the S-methylcysteine intermediate in catalysis.

This sequence belongs to the radical SAM superfamily. RlmN family. The cofactor is [4Fe-4S] cluster.

Its subcellular location is the cytoplasm. It carries out the reaction adenosine(2503) in 23S rRNA + 2 reduced [2Fe-2S]-[ferredoxin] + 2 S-adenosyl-L-methionine = 2-methyladenosine(2503) in 23S rRNA + 5'-deoxyadenosine + L-methionine + 2 oxidized [2Fe-2S]-[ferredoxin] + S-adenosyl-L-homocysteine. The catalysed reaction is adenosine(37) in tRNA + 2 reduced [2Fe-2S]-[ferredoxin] + 2 S-adenosyl-L-methionine = 2-methyladenosine(37) in tRNA + 5'-deoxyadenosine + L-methionine + 2 oxidized [2Fe-2S]-[ferredoxin] + S-adenosyl-L-homocysteine. Specifically methylates position 2 of adenine 2503 in 23S rRNA and position 2 of adenine 37 in tRNAs. The polypeptide is Probable dual-specificity RNA methyltransferase RlmN (Trichodesmium erythraeum (strain IMS101)).